The following is a 215-amino-acid chain: Cytochrome b6 (215 aa).

A helical membrane pass occupies residues 32 to 52 (IFYCLGGIVFVSFLIQVATGF). C35 is a binding site for heme c. Heme b is bound by residues H86 and H100. Transmembrane regions (helical) follow at residues 90–110 (VSMMVLMMILHVFRVYLTGGF), 116–136 (LTWVTGVILGVLTVSFGVTGY), and 186–206 (LHTFVLPLLTAVFMLMHFLMI). 2 residues coordinate heme b: H187 and H202.

It belongs to the cytochrome b family. PetB subfamily. In terms of assembly, the 4 large subunits of the cytochrome b6-f complex are cytochrome b6, subunit IV (17 kDa polypeptide, PetD), cytochrome f and the Rieske protein, while the 4 small subunits are PetG, PetL, PetM and PetN. The complex functions as a dimer. It depends on heme b as a cofactor. The cofactor is heme c.

The protein localises to the plastid. Its subcellular location is the chloroplast thylakoid membrane. Its function is as follows. Component of the cytochrome b6-f complex, which mediates electron transfer between photosystem II (PSII) and photosystem I (PSI), cyclic electron flow around PSI, and state transitions. This is Cytochrome b6 from Pyropia yezoensis (Susabi-nori).